Here is a 57-residue protein sequence, read N- to C-terminus: High light-inducible protein HliD (57 aa).

Residues 25–30 carry the Chlorophyll-binding motif motif; that stretch reads EKLNGR. The chain crosses the membrane as a helical span at residues 25–46; the sequence is EKLNGRAAMVGFLLILVIEYFT.

This sequence belongs to the Hlip family. As to quaternary structure, probably forms dimers which bind 6 chlorophyll a and 2 beta-carotenoid molecules. Cofractionates in an approximately 50 kDa fraction of the thylakoid membrane with HliC. Does not associate with mature PSII. Purified in several chlorophyll- and carotenoid-containing complexes, including photosystem II (PSII) assembly intermediate complex RCII* (iD1, D1, D2, PsbE, PsbF, PsbI, Ycf39, Ycf48, HliC and HliD) and the Ycf39-Hlip complex (Ycf39, HliC, HliD and pigments).

The protein resides in the cellular thylakoid membrane. Functionally, involved in photosystem II (PSII) assembly and/or repair under high light stress. Required for binding of chlorophyll and carotenoids by the Ycf39-Hlip complex. The Ycf39-Hlip complex binds D1 at an early stage of PSII assembly along with Ycf48, ribosomes and ChlG, the last enzyme in chlorophyll biosynthesis; it may be involved in chlorophyll reuse and delivery to D1 in the initial stages of PSII assembly. Binds chlorophyll a and beta-carotenoid in a 3:1 stoichiometry in the presence and absence of Yfc39; in the Ycf39-HliC-HliD complex, HliD binds all the pigment. The Ycf39-Hlip complex efficiently quenches chlorophyll fluorescence, contributing to photoprotection. Deletion of 4 to 5 members of the Hlip family suggests the proteins are involved in regulation of chlorophyll biosynthesis, in stabilization of chlorophyll-binding proteins and/or in reuse of chlorophylls, and may regulate tetrapyrrole biosynthesis. Might bind chlorophyll and/or carotenoids in association with HliC (called the ScpBE pair). The Hlips might regulate tetrapyrrole biosynthesis, maybe at the level of aminolevulinic acid synthesis and probably stabilize PSII assembly intermediates. This Synechocystis sp. (strain ATCC 27184 / PCC 6803 / Kazusa) protein is High light-inducible protein HliD (hliD).